Consider the following 555-residue polypeptide: MAAAVSLWPRTEPLLLGALPVPPPARLGPHYLRKMAAYARARAAEGCYPRLSWPRWRHIACGKLQLGRGLAWLYFERFHDLLPPPDPPRRLQRAEAEAACGSAEELERERGKLSVDTLRFLLFLYLQQLNKASLRTSLIGEEWPSHRARAAGLPGRAAGQSKNWNDQDHLAFLLTHLSDMLELLLEPEQLGASSHATHNSLVSYEAVCALSFLIEGTVNNSRTIHPLHELALWQPCHGQNGYSKISKTFSFPKLENWLRSCLIINPFGMTACLRSGKKLAWAQQVEGTTRRAKIACNTRVVPEVSPMVIMSQVYKQTLAKSSDTLVGAHVRIHRCNESFIYLLSPLCSVTIEKCRNSTFVLGPVEASVHVHSCDNIKVITVCHCLSLSSTTGCTFHILTPTQPLILAGNQAISFAPFHTHYPMLEDHMAQVGLATVPNYWDSPMMVCKEGSDASVFRLLSPLDFYTFVIPFEMEGDTTETPGGLPHAYQKALNQREQKVQIWQKMVKEACLTKDQRKQFQMLVESKFYEWLIQTGNRQQLDSLVPPAVGSKQAAG.

Residues 302 to 433 (PEVSPMVIMS…LEDHMAQVGL (132 aa)) form the C-CAP/cofactor C-like domain.

It belongs to the TBCC family.

Its subcellular location is the cytoplasm. The protein localises to the cytoskeleton. The protein resides in the microtubule organizing center. It is found in the centrosome. It localises to the spindle pole. Functionally, may play a role in the regulation of centrosome and Golgi apparatus positioning. The sequence is that of TBCC domain-containing protein 1 (TBCCD1) from Gallus gallus (Chicken).